Here is a 968-residue protein sequence, read N- to C-terminus: MAGRNIEKMASIDAQLRQLVPAKVSEDDKLVEYDALLLDRFLDILQDLHGEDLRETVQELYELSAEYEGKREPSKLEELGSVLTSLDPGDSIVISKAFSHMLNLANLAEEVQIAHRRRIKKLKKGDFVDESSATTESDIEETFKRLVSDLGKSPEEIFDALKNQTVDLVLTAHPTQSVRRSLLQKHGRIRDCLAQLYAKDITPDDKQELDESLQREIQAAFRTDEIRRTPPTPQDEMRAGMSYFHETIWKGVPKFLRRVDTALKNIGIDERVPYNAPLIQFSSWMGGDRDGNPRVTPEVTRDVCLLARMMAANLYYNQIENLMFELSMWRCTDEFRVRADELHRNSRKDAAKHYIEFWKTIPPTEPYRVILGDVRDKLYHTRERSRQLLSNGISDIPEEATFTNVEQFLEPLELCYRSLCSCGDSPIADGSLLDFLRQVSTFGLSLVRLDIRQESERHTDVLDAITKHLDIGSSYRDWSEEGRQEWLLAELSGKRPLFGPDLPKTEEISDVLDTFKVISELPSDCFGAYIISMATSPSDVLAVELLQRECHVKNPLRVVPLFEKLADLEAAPAAVARLFSIDWYKNRINGKQEVMIGYSDSGKDAGRLSAAWELYKAQEELVKVAKKYGVKLTMFHGRGGTVGRGGGPTHLAILSQPPDTVNGSLRVTVQGEVIEQSFGEAHLCFRTLQRFTAATLEHGMNPPISPKPEWRALLDEMAVVATEEYRSVVFQEPRFVEYFRLATPELEYGRMNIGSRPSKRKPSGGIESLRAIPWIFAWTQTRFHLPVWLGFGAAFRYAIKKDVRNLHMLQDMYKQWPFFRVTIDLIEMVFAKGDPGIAALYDKLLVSEDLWAFGEKLRANFDETKNLVLQTAGHKDLLEGDPYLKQRLRLRDSYITTLNVCQAYTLKRIRDANYNVTLRPHISKEIMQSSKSAQELVKLNPTSEYAPGLEDTLILTMKGIAAGLQNTG.

Residue serine 11 is modified to Phosphoserine. Active-site residues include histidine 173 and lysine 603. The residue at position 705 (serine 705) is a Phosphoserine.

It belongs to the PEPCase type 1 family. As to quaternary structure, homotetramer. It depends on Mg(2+) as a cofactor. In terms of tissue distribution, expressed in roots and siliques, and to a lower extent in stems, leaves and flowers.

Its subcellular location is the cytoplasm. The catalysed reaction is oxaloacetate + phosphate = phosphoenolpyruvate + hydrogencarbonate. Its activity is regulated as follows. By light-reversible phosphorylation. In terms of biological role, through the carboxylation of phosphoenolpyruvate (PEP) it forms oxaloacetate, a four-carbon dicarboxylic acid source for the tricarboxylic acid cycle. The protein is Phosphoenolpyruvate carboxylase 3 (PPC3) of Arabidopsis thaliana (Mouse-ear cress).